A 247-amino-acid chain; its full sequence is Carboxy-S-adenosyl-L-methionine synthase (247 aa).

Residues Tyr40, 65–67 (GSS), 90–91 (DN), 122–123 (DI), Asn137, and Arg204 contribute to the S-adenosyl-L-methionine site.

This sequence belongs to the class I-like SAM-binding methyltransferase superfamily. Cx-SAM synthase family. In terms of assembly, homodimer.

It carries out the reaction prephenate + S-adenosyl-L-methionine = carboxy-S-adenosyl-L-methionine + 3-phenylpyruvate + H2O. Functionally, catalyzes the conversion of S-adenosyl-L-methionine (SAM) to carboxy-S-adenosyl-L-methionine (Cx-SAM). The chain is Carboxy-S-adenosyl-L-methionine synthase from Pseudomonas fluorescens (strain ATCC BAA-477 / NRRL B-23932 / Pf-5).